The primary structure comprises 1207 residues: ATP-dependent helicase/nuclease subunit A (1207 aa).

Residues 2 to 472 enclose the UvrD-like helicase ATP-binding domain; it reads PQFTKEQQQA…ILLSDNFRST (471 aa). 23–30 contacts ATP; the sequence is ASAGSGKT. The region spanning 492 to 783 is the UvrD-like helicase C-terminal domain; the sequence is GGIDYSKEGQ…RLMTIHGSKG (292 aa).

The protein belongs to the helicase family. AddA subfamily. In terms of assembly, heterodimer of AddA and AddB/RexB. The cofactor is Mg(2+).

The catalysed reaction is Couples ATP hydrolysis with the unwinding of duplex DNA by translocating in the 3'-5' direction.. The enzyme catalyses ATP + H2O = ADP + phosphate + H(+). The heterodimer acts as both an ATP-dependent DNA helicase and an ATP-dependent, dual-direction single-stranded exonuclease. Recognizes the chi site generating a DNA molecule suitable for the initiation of homologous recombination. The AddA nuclease domain is required for chi fragment generation; this subunit has the helicase and 3' -&gt; 5' nuclease activities. The sequence is that of ATP-dependent helicase/nuclease subunit A from Lactobacillus acidophilus (strain ATCC 700396 / NCK56 / N2 / NCFM).